A 112-amino-acid polypeptide reads, in one-letter code: DNA-binding protein TON_1102 (112 aa).

It belongs to the PDCD5 family.

This Thermococcus onnurineus (strain NA1) protein is DNA-binding protein TON_1102.